A 504-amino-acid polypeptide reads, in one-letter code: MEPAGPAPGRLGPLLCLLLAASCAWSGVAGEEELQVIQPDKSVLVAAGETATLRCTATSLIPVGPIQWFRGAGPGRELIYNQKEGHFPRVTTVSDLTKRNNMDFSIRIGNITPADAGTYYCVKFRKGSPDDVEFKSGAGTELSVRAKPSAPVVSGPAARATPQHTVSFTCESHGFSPRDITLKWFKNGNELSDFQTNVDPVGESVSYSIHSTAKVVLTREDVHSQVICEVAHVTLQGDPLRGTANLSETIRVPPTLEVTQQPVRAENQVNVTCQVRKFYPQRLQLTWLENGNVSRTETASTVTENKDGTYNWMSWLLVNVSAHRDDVKLTCQVEHDGQPAVSKSHDLKVSAHPKEQGSNTAAENTGSNERNIYIVVGVVCTLLVALLMAALYLVRIRQKKAQGSTSSTRLHEPEKNAREITQDTNDITYADLNLPKGKKPAPQAAEPNNHTEYASIQTSPQPASEDTLTYADLDMVHLNRTPKQPAPKPEPSFSEYASVQVPRK.

The first 30 residues, 1–30 (MEPAGPAPGRLGPLLCLLLAASCAWSGVAG), serve as a signal peptide directing secretion. Topologically, residues 31 to 373 (EEELQVIQPD…NTGSNERNIY (343 aa)) are extracellular. Positions 32–137 (EELQVIQPDK…SPDDVEFKSG (106 aa)) constitute an Ig-like V-type domain. Disulfide bonds link Cys55-Cys121 and Cys170-Cys228. Ig-like C1-type domains follow at residues 148-247 (PSAP…ANLS) and 254-348 (PTLE…HDLK). 4 N-linked (GlcNAc...) asparagine glycosylation sites follow: Asn245, Asn270, Asn292, and Asn319. A disulfide bridge connects residues Cys273 and Cys331. Residues 336–355 (DGQPAVSKSHDLKVSAHPKE) show a composition bias toward basic and acidic residues. The segment at 336–364 (DGQPAVSKSHDLKVSAHPKEQGSNTAAEN) is disordered. Residues 374-394 (IVVGVVCTLLVALLMAALYLV) form a helical membrane-spanning segment. Residues 395–504 (RIRQKKAQGS…EYASVQVPRK (110 aa)) lie on the Cytoplasmic side of the membrane. Residues 402 to 504 (QGSTSSTRLH…EYASVQVPRK (103 aa)) are disordered. A compositionally biased stretch (basic and acidic residues) spans 409-421 (RLHEPEKNAREIT). Tyr429 is modified (phosphotyrosine; by Tyr-kinases). The short motif at 429–432 (YADL) is the SH2-binding element. Positions 439–444 (KPAPQA) match the SH3-binding motif. Polar residues predominate over residues 446-467 (EPNNHTEYASIQTSPQPASEDT). Phosphotyrosine; by Tyr-kinases occurs at positions 453 and 470. Short sequence motifs (SH2-binding) lie at residues 453–456 (YASI), 470–473 (YADL), and 496–499 (YASV). Tyr496 is subject to Phosphotyrosine.

Binds PTPN11 when tyrosine-phosphorylated, except in macrophages, where it primarily binds PTPN6. Binds GRB2 in vitro. Binds FGR. Binds JAK2 irrespective of its phosphorylation status and forms a stable complex. Binds SCAP1 and/or SCAP2. The resulting complex recruits FYB1. Binds PTK2B. Interacts with TRIM2. In terms of processing, N-glycosylated. Phosphorylated on tyrosine residues in response to stimulation with EGF, growth hormone, insulin and PDGF. Dephosphorylated by PTPN11. Ubiquitous. Highly expressed in brain. Detected on myeloid cells, but not T-cells. Detected at lower levels in heart, placenta, lung, testis, ovary, colon, liver, small intestine, prostate, spleen, kidney, skeletal muscle and pancreas.

Its subcellular location is the membrane. In terms of biological role, immunoglobulin-like cell surface receptor for CD47. Acts as docking protein and induces translocation of PTPN6, PTPN11 and other binding partners from the cytosol to the plasma membrane. Supports adhesion of cerebellar neurons, neurite outgrowth and glial cell attachment. May play a key role in intracellular signaling during synaptogenesis and in synaptic function. Involved in the negative regulation of receptor tyrosine kinase-coupled cellular responses induced by cell adhesion, growth factors or insulin. Mediates negative regulation of phagocytosis, mast cell activation and dendritic cell activation. CD47 binding prevents maturation of immature dendritic cells and inhibits cytokine production by mature dendritic cells. Plays a role in antiviral immunity and limits new world arenavirus infection by decreasing virus internalization. Receptor for THBS1. Interaction with THBS1 stimulates phosphorylation of SIRPA. In response to THBS1, involved in ROS signaling in non-phagocytic cells, stimulating NADPH oxidase-derived ROS production. The chain is Tyrosine-protein phosphatase non-receptor type substrate 1 (SIRPA) from Homo sapiens (Human).